A 593-amino-acid chain; its full sequence is Histone-arginine methyltransferase CARMER (593 aa).

One can recognise an SAM-dependent MTase PRMT-type domain in the interval 122–429 (ASQYFQFYGY…QRQSYDVEMD (308 aa)). Residues glutamine 135, arginine 144, glycine 168, glutamate 190, glutamate 219, and threonine 247 each contribute to the S-adenosyl-L-methionine site. Arginine 482 carries the asymmetric dimethylarginine; by autocatalysis modification. The segment at 521–540 (LISSTGRQQSQQQTTPAQPL) is disordered. Over residues 523–535 (SSTGRQQSQQQTT) the composition is skewed to low complexity.

It belongs to the class I-like SAM-binding methyltransferase superfamily. Protein arginine N-methyltransferase family. As to quaternary structure, homodimer. Post-translationally, the dimethylated protein is the major form.

Its subcellular location is the cytoplasm. The protein localises to the nucleus. It catalyses the reaction L-arginyl-[protein] + 2 S-adenosyl-L-methionine = N(omega),N(omega)-dimethyl-L-arginyl-[protein] + 2 S-adenosyl-L-homocysteine + 2 H(+). Functionally, methylates (mono- and asymmetric dimethylation) the guanidino nitrogens of arginyl residues in proteins. May methylate histone H3 at 'Arg-17' and activate transcription via chromatin remodeling. The sequence is that of Histone-arginine methyltransferase CARMER from Aedes aegypti (Yellowfever mosquito).